Consider the following 340-residue polypeptide: Phosphoribosylformylglycinamidine cyclo-ligase (340 aa).

It belongs to the AIR synthase family.

Its subcellular location is the cytoplasm. It carries out the reaction 2-formamido-N(1)-(5-O-phospho-beta-D-ribosyl)acetamidine + ATP = 5-amino-1-(5-phospho-beta-D-ribosyl)imidazole + ADP + phosphate + H(+). It functions in the pathway purine metabolism; IMP biosynthesis via de novo pathway; 5-amino-1-(5-phospho-D-ribosyl)imidazole from N(2)-formyl-N(1)-(5-phospho-D-ribosyl)glycinamide: step 2/2. This is Phosphoribosylformylglycinamidine cyclo-ligase from Streptococcus pneumoniae serotype 19F (strain G54).